Here is a 464-residue protein sequence, read N- to C-terminus: Siroheme synthase (464 aa).

Positions 1–203 are precorrin-2 dehydrogenase /sirohydrochlorin ferrochelatase; it reads MDYLPLFHNL…GQETEAERLL (203 aa). Residues 22–23 and 43–44 contribute to the NAD(+) site; these read EI and PQ. Serine 128 carries the post-translational modification Phosphoserine. The uroporphyrinogen-III C-methyltransferase stretch occupies residues 216–464; it reads GEVYLVGAGP…AWFEGRQSAD (249 aa). Proline 225 contributes to the S-adenosyl-L-methionine binding site. The active-site Proton acceptor is the aspartate 248. Catalysis depends on lysine 270, which acts as the Proton donor. S-adenosyl-L-methionine-binding positions include 301-303, isoleucine 306, 331-332, methionine 383, and glycine 412; these read GGD and TA.

This sequence in the N-terminal section; belongs to the precorrin-2 dehydrogenase / sirohydrochlorin ferrochelatase family. It in the C-terminal section; belongs to the precorrin methyltransferase family.

It catalyses the reaction uroporphyrinogen III + 2 S-adenosyl-L-methionine = precorrin-2 + 2 S-adenosyl-L-homocysteine + H(+). It carries out the reaction precorrin-2 + NAD(+) = sirohydrochlorin + NADH + 2 H(+). The enzyme catalyses siroheme + 2 H(+) = sirohydrochlorin + Fe(2+). Its pathway is cofactor biosynthesis; adenosylcobalamin biosynthesis; precorrin-2 from uroporphyrinogen III: step 1/1. It functions in the pathway cofactor biosynthesis; adenosylcobalamin biosynthesis; sirohydrochlorin from precorrin-2: step 1/1. The protein operates within porphyrin-containing compound metabolism; siroheme biosynthesis; precorrin-2 from uroporphyrinogen III: step 1/1. It participates in porphyrin-containing compound metabolism; siroheme biosynthesis; siroheme from sirohydrochlorin: step 1/1. Its pathway is porphyrin-containing compound metabolism; siroheme biosynthesis; sirohydrochlorin from precorrin-2: step 1/1. Functionally, multifunctional enzyme that catalyzes the SAM-dependent methylations of uroporphyrinogen III at position C-2 and C-7 to form precorrin-2 via precorrin-1. Then it catalyzes the NAD-dependent ring dehydrogenation of precorrin-2 to yield sirohydrochlorin. Finally, it catalyzes the ferrochelation of sirohydrochlorin to yield siroheme. This is Siroheme synthase from Azotobacter vinelandii (strain DJ / ATCC BAA-1303).